Consider the following 335-residue polypeptide: Phosphate acyltransferase (335 aa).

Belongs to the PlsX family. In terms of assembly, homodimer. Probably interacts with PlsY.

The protein localises to the cytoplasm. The catalysed reaction is a fatty acyl-[ACP] + phosphate = an acyl phosphate + holo-[ACP]. The protein operates within lipid metabolism; phospholipid metabolism. Its function is as follows. Catalyzes the reversible formation of acyl-phosphate (acyl-PO(4)) from acyl-[acyl-carrier-protein] (acyl-ACP). This enzyme utilizes acyl-ACP as fatty acyl donor, but not acyl-CoA. This chain is Phosphate acyltransferase, found in Streptococcus equi subsp. zooepidemicus (strain MGCS10565).